The primary structure comprises 866 residues: Protein translocase subunit SecA (866 aa).

Residues Gln-87, 105 to 109 (GEGKT), and Asp-514 contribute to the ATP site. Residues 819–858 (VSPIGTPSSEGGGETSGADTYSNKKIGRNDPCPCGSGKKY) form a disordered region. Positions 850, 852, 861, and 862 each coordinate Zn(2+).

Belongs to the SecA family. As to quaternary structure, monomer and homodimer. Part of the essential Sec protein translocation apparatus which comprises SecA, SecYEG and auxiliary proteins SecDF. Other proteins may also be involved. Zn(2+) is required as a cofactor.

Its subcellular location is the cell inner membrane. It is found in the cytoplasm. The catalysed reaction is ATP + H2O + cellular proteinSide 1 = ADP + phosphate + cellular proteinSide 2.. Its function is as follows. Part of the Sec protein translocase complex. Interacts with the SecYEG preprotein conducting channel. Has a central role in coupling the hydrolysis of ATP to the transfer of proteins into and across the cell membrane, serving as an ATP-driven molecular motor driving the stepwise translocation of polypeptide chains across the membrane. This is Protein translocase subunit SecA from Elusimicrobium minutum (strain Pei191).